A 259-amino-acid chain; its full sequence is Proteasome subunit alpha (259 aa).

It belongs to the peptidase T1A family. In terms of assembly, the 20S proteasome core is composed of 14 alpha and 14 beta subunits that assemble into four stacked heptameric rings, resulting in a barrel-shaped structure. The two inner rings, each composed of seven catalytic beta subunits, are sandwiched by two outer rings, each composed of seven alpha subunits. The catalytic chamber with the active sites is on the inside of the barrel. Has a gated structure, the ends of the cylinder being occluded by the N-termini of the alpha-subunits. Is capped at one or both ends by the proteasome regulatory ATPase, PAN.

The protein resides in the cytoplasm. With respect to regulation, the formation of the proteasomal ATPase PAN-20S proteasome complex, via the docking of the C-termini of PAN into the intersubunit pockets in the alpha-rings, triggers opening of the gate for substrate entry. Interconversion between the open-gate and close-gate conformations leads to a dynamic regulation of the 20S proteasome proteolysis activity. Component of the proteasome core, a large protease complex with broad specificity involved in protein degradation. The sequence is that of Proteasome subunit alpha from Methanococcus maripaludis (strain DSM 14266 / JCM 13030 / NBRC 101832 / S2 / LL).